Reading from the N-terminus, the 242-residue chain is Probable transcriptional regulatory protein NGO_1291 (242 aa).

Belongs to the TACO1 family.

It is found in the cytoplasm. The polypeptide is Probable transcriptional regulatory protein NGO_1291 (Neisseria gonorrhoeae (strain ATCC 700825 / FA 1090)).